Reading from the N-terminus, the 478-residue chain is Putative indole-3-acetic acid-amido synthetase GH3.10 (478 aa).

The protein belongs to the IAA-amido conjugating enzyme family.

In terms of biological role, may catalyze the synthesis of indole-3-acetic acid (IAA)-amino acid conjugates, providing a mechanism for the plant to cope with the presence of excess auxin. This Oryza sativa subsp. japonica (Rice) protein is Putative indole-3-acetic acid-amido synthetase GH3.10 (GH3.10).